The following is a 635-amino-acid chain: 1-deoxy-D-xylulose-5-phosphate synthase (635 aa).

Residues His-74 and 115–117 (AHS) each bind thiamine diphosphate. Asp-146 contacts Mg(2+). Thiamine diphosphate is bound by residues 147–148 (GA), Asn-176, Tyr-283, and Glu-365. Asn-176 is a binding site for Mg(2+).

Belongs to the transketolase family. DXPS subfamily. In terms of assembly, homodimer. Mg(2+) is required as a cofactor. Requires thiamine diphosphate as cofactor.

It catalyses the reaction D-glyceraldehyde 3-phosphate + pyruvate + H(+) = 1-deoxy-D-xylulose 5-phosphate + CO2. The protein operates within metabolic intermediate biosynthesis; 1-deoxy-D-xylulose 5-phosphate biosynthesis; 1-deoxy-D-xylulose 5-phosphate from D-glyceraldehyde 3-phosphate and pyruvate: step 1/1. Functionally, catalyzes the acyloin condensation reaction between C atoms 2 and 3 of pyruvate and glyceraldehyde 3-phosphate to yield 1-deoxy-D-xylulose-5-phosphate (DXP). The polypeptide is 1-deoxy-D-xylulose-5-phosphate synthase (Polaromonas sp. (strain JS666 / ATCC BAA-500)).